The primary structure comprises 856 residues: MHTFENHTPMMKQYLKIKAENPDVLLFYRMGDFYELFYDDAKKAAELLDISLTKRGQSAGQPVPMAGVPYHAIEGYLAKLVHLGESVAICEQVGEPVIAKGPVERQVVRIVTPGTVSDEALLPEKQDNLIATIYQEKTQFGLAVLDMTSGCFQISELQDAASLQAELQRIQPVELLYSEALEDKHLIEQFKGLRRRPLWEFELSTAIQLLNRQFGTKDLRGFGVEKAVLGLCAAGCLLQYAKETQRTALPHIQSISLLQNSDTVQIDASTRRNLELTQNLAGGTENTLAAILDKCVTPMGSRLLKRWIHQPIRNIEKLQCRQQHIQMLLQQNLVEELQPLLRQVGDMERILARVALRSARPRDLTRLRTALEQIPFIQHQLTKIPHFVAFSQQIADFSVQLALLQRAIIDNPPLLIRDGGVIAEGYNEELDEWRSLSEGATRYLKDLEQRERANTGIDTLKIGFNAVHGYYIQISQGQAHKAPLHYVRRQTLKNAERYIIPELKTYEEKVLKAKGASLALEKQLYDEIFDQLLPHLGDLQLASLTLAELDVLTNLAERAETLNYVQPQFSTQIGLQIMQGRHPVVEQVLKDPFIANPVELNQKRHLLIITGPNMGGKSTYMRQTALITLMAYIGSFVPAESAVIGPIDRIFTRIGASDDLASGRSTFMVEMTEMANILHQATEQSLVLIDEIGRGTSTYDGLSLAWACAEQLAQKIRSLTLFATHYFELTVLPEKIDGIHNVHLDAIEHNDNIAFMHSIQEGAASKSYGLAVAALAGVPQNVIKSAKQKLKQLETLSQQNSCQSQSVLTQVQGELTLMEEEENTSAVIETLKTLDPNELSPKQALECLYQLKKMLN.

611 to 618 (GPNMGGKS) contributes to the ATP binding site.

Belongs to the DNA mismatch repair MutS family.

Functionally, this protein is involved in the repair of mismatches in DNA. It is possible that it carries out the mismatch recognition step. This protein has a weak ATPase activity. This chain is DNA mismatch repair protein MutS, found in Histophilus somni (strain 129Pt) (Haemophilus somnus).